Here is a 498-residue protein sequence, read N- to C-terminus: Lysine--tRNA ligase (498 aa).

Residues glutamate 408 and glutamate 415 each coordinate Mg(2+).

Belongs to the class-II aminoacyl-tRNA synthetase family. Homodimer. The cofactor is Mg(2+).

The protein localises to the cytoplasm. It carries out the reaction tRNA(Lys) + L-lysine + ATP = L-lysyl-tRNA(Lys) + AMP + diphosphate. This is Lysine--tRNA ligase from Pediococcus pentosaceus (strain ATCC 25745 / CCUG 21536 / LMG 10740 / 183-1w).